Reading from the N-terminus, the 617-residue chain is Proline--tRNA ligase (617 aa).

It belongs to the class-II aminoacyl-tRNA synthetase family. ProS type 1 subfamily. As to quaternary structure, homodimer.

It localises to the cytoplasm. The catalysed reaction is tRNA(Pro) + L-proline + ATP = L-prolyl-tRNA(Pro) + AMP + diphosphate. Its function is as follows. Catalyzes the attachment of proline to tRNA(Pro) in a two-step reaction: proline is first activated by ATP to form Pro-AMP and then transferred to the acceptor end of tRNA(Pro). As ProRS can inadvertently accommodate and process non-cognate amino acids such as alanine and cysteine, to avoid such errors it has two additional distinct editing activities against alanine. One activity is designated as 'pretransfer' editing and involves the tRNA(Pro)-independent hydrolysis of activated Ala-AMP. The other activity is designated 'posttransfer' editing and involves deacylation of mischarged Ala-tRNA(Pro). The misacylated Cys-tRNA(Pro) is not edited by ProRS. This chain is Proline--tRNA ligase, found in Streptococcus pneumoniae (strain P1031).